We begin with the raw amino-acid sequence, 561 residues long: MRGSNNTDLFDPKTEMDSNFSRHGSSSEGDFGFAFNDSNFSDRLLRIEILGGPSDSRSDAEGCTSIADWARHRKRRREDNKKDNGVAISDIVACAEEQILTDNNQPDMDDAPGGDNLDDEGEAMVEEALSGDDDASSEPNWGIDCSTVVRVKELHISSPILAAKSPFFYKLFSNGMRESEQRHVTLRISAQEEGALMELLNFMYSNSLSVTTAPALLDVLMAADKFEVASCMRYCSRLLRNMPMTPDSALLYLELPSSVLMAEAVQPLTDAAKQFLASRYKDITKFHDEVMALPLAGIEAILSSDDLQIASEDAVYDFVLKWARGQYSSLEDRREILGSRLALYIRFPYMTCRKLKKVLTCSDFEHEVASKQVLEALFFKAEAPHRQRILAAEGSDSMNRRFIERAYKYRPVKVVEFELPRPQCVVYLDLKREECAGLFPSGRVYSQAFHLGGQGFFLSAHCNMDQQSSFHCFGLFLGMQEKGAVSFGVDYEFAARDKSTKEEYVSKYKGNYTFTGGKAVGYRNLFGIPWTSFIAEDSQHFINGILHLRAELTIKRSSDLH.

2 disordered regions span residues 1–31 and 100–119; these read MRGSNNTDLFDPKTEMDSNFSRHGSSSEGDF and LTDNNQPDMDDAPGGDNLDD. Residues 17-28 show a composition bias toward polar residues; sequence DSNFSRHGSSSE. A compositionally biased stretch (acidic residues) spans 107 to 119; it reads DMDDAPGGDNLDD. The BTB domain maps to 143 to 212; that stretch reads IDCSTVVRVK…MYSNSLSVTT (70 aa). Residues 266-358 enclose the BACK domain; it reads QPLTDAAKQF…YMTCRKLKKV (93 aa).

The protein operates within protein modification; protein ubiquitination. In terms of biological role, may act as a substrate-specific adapter of an E3 ubiquitin-protein ligase complex (CUL3-RBX1-BTB) which mediates the ubiquitination and subsequent proteasomal degradation of target proteins. This Arabidopsis thaliana (Mouse-ear cress) protein is BTB/POZ domain-containing protein At2g46260.